We begin with the raw amino-acid sequence, 105 residues long: uncharacterized protein (105 aa).

The next 2 helical transmembrane spans lie at 10-30 (YVVF…FKIG) and 48-68 (YPLA…YPPS).

The protein resides in the membrane. This is an uncharacterized protein from Acanthamoeba polyphaga mimivirus (APMV).